Reading from the N-terminus, the 246-residue chain is E3 ubiquitin-protein ligase MARCHF2 (246 aa).

The RING-CH-type zinc finger occupies 56-116 (GTQSDGPICR…ELCHTEFAVE (61 aa)). Zn(2+)-binding residues include C64, C67, C80, C82, H90, C93, C106, and C109. The next 2 helical transmembrane spans lie at 138 to 158 (LFCDMVCFLFITPLAAISGWL) and 175 to 195 (AVGLIALTIALFTIYVLWTLV).

The protein localises to the endoplasmic reticulum membrane. Its subcellular location is the lysosome membrane. The protein resides in the endosome membrane. It catalyses the reaction S-ubiquitinyl-[E2 ubiquitin-conjugating enzyme]-L-cysteine + [acceptor protein]-L-lysine = [E2 ubiquitin-conjugating enzyme]-L-cysteine + N(6)-ubiquitinyl-[acceptor protein]-L-lysine.. Its pathway is protein modification; protein ubiquitination. E3 ubiquitin-protein ligase which may be involved in endosomal trafficking. E3 ubiquitin ligases accept ubiquitin from an E2 ubiquitin-conjugating enzyme in the form of a thioester and then directly transfer the ubiquitin to targeted substrates. In Xenopus tropicalis (Western clawed frog), this protein is E3 ubiquitin-protein ligase MARCHF2 (marchf2).